The chain runs to 763 residues: Ribonucleoside-diphosphate reductase subunit alpha (763 aa).

One can recognise an ATP-cone domain in the interval 5–95 (LFVTKRNGKK…IFHLRKKAYG (91 aa)). ATP-binding positions include Lys9, 15-21 (EKINLDK), Thr55, and Lys91. Thr209 serves as a coordination point for GDP. Cys225 and Cys462 are joined by a disulfide. Residues 232 to 234 (DNL), Arg262, and Arg269 each bind dTTP. Asn437 provides a ligand contact to GDP. The active-site Proton acceptor is Asn437. Catalysis depends on Cys439, which acts as the Cysteine radical intermediate. Residues Glu441 and 623-625 (ETS) contribute to the GDP site. Glu441 functions as the Proton acceptor in the catalytic mechanism.

Belongs to the ribonucleoside diphosphate reductase large chain family. Tetramer of two alpha and two beta subunits.

The enzyme catalyses a 2'-deoxyribonucleoside 5'-diphosphate + [thioredoxin]-disulfide + H2O = a ribonucleoside 5'-diphosphate + [thioredoxin]-dithiol. With respect to regulation, under complex allosteric control mediated by deoxynucleoside triphosphates and ATP binding to separate specificity and activation sites on the alpha subunit. The type of nucleotide bound at the specificity site determines substrate preference. It seems probable that ATP makes the enzyme reduce CDP and UDP, dGTP favors ADP reduction and dTTP favors GDP reduction. Stimulated by ATP and inhibited by dATP binding to the activity site. Functionally, provides the precursors necessary for DNA synthesis. Catalyzes the biosynthesis of deoxyribonucleotides from the corresponding ribonucleotides. The protein is Ribonucleoside-diphosphate reductase subunit alpha (nrdA) of Buchnera aphidicola subsp. Schizaphis graminum (strain Sg).